Reading from the N-terminus, the 208-residue chain is MAGTARHDREMAIQSKKKLSTATDPIERLRLQCLARGSAGIKGLGRVFRIMDDNNNRTLDFKEFLKGLNDYAVVMEKEEAEELFQRFDRDGSGTIDFNEFLLTLRPPMSRARKEVIMKAFRKLDKTGDGVITIEDLREVYNAKHHPKYQNGEWTEEQVFRKFLDNFDSPYDKDGLVTPEEFMNYYAGVSASIDTDVYFIIMMTTAWKL.

EF-hand domains lie at 39-74 (AGIK…YAVV), 75-110 (MEKE…PMSR), 111-146 (ARKE…KHHP), and 154-191 (TEEQ…VSAS). Residues Asp-52, Asn-54, Asn-56, Thr-58, Glu-63, Asp-88, Asp-90, Ser-92, Thr-94, and Glu-99 each contribute to the Ca(2+) site.

Its subcellular location is the cytoplasm. The chain is Calcyphosin-like protein (Capsl) from Mus musculus (Mouse).